The following is a 483-amino-acid chain: NADH-quinone oxidoreductase subunit N (483 aa).

Helical transmembrane passes span 8–28, 45–65, 78–98, 106–126, 131–151, 166–186, 206–226, 241–261, 275–295, 303–323, 330–350, 373–393, 399–419, and 452–472; these read INLA…GLLL, IAAG…GATQ, FAAF…VVSW, LGNG…MFMI, FLVL…LAAY, FVLG…IYGV, MLGI…KIAA, PTSV…AALF, WGPI…LAGL, LLAY…AVGN, VLVY…LILV, LALL…LAGF, IFMA…VLFS, and AIVG…GSLM.

This sequence belongs to the complex I subunit 2 family. NDH-1 is composed of 14 different subunits. Subunits NuoA, H, J, K, L, M, N constitute the membrane sector of the complex.

Its subcellular location is the cell inner membrane. It catalyses the reaction a quinone + NADH + 5 H(+)(in) = a quinol + NAD(+) + 4 H(+)(out). Functionally, NDH-1 shuttles electrons from NADH, via FMN and iron-sulfur (Fe-S) centers, to quinones in the respiratory chain. The immediate electron acceptor for the enzyme in this species is believed to be ubiquinone. Couples the redox reaction to proton translocation (for every two electrons transferred, four hydrogen ions are translocated across the cytoplasmic membrane), and thus conserves the redox energy in a proton gradient. This Magnetococcus marinus (strain ATCC BAA-1437 / JCM 17883 / MC-1) protein is NADH-quinone oxidoreductase subunit N.